The sequence spans 500 residues: 7-alpha-hydroxycholest-4-en-3-one 12-alpha-hydroxylase (500 aa).

Residues 2-21 form a helical membrane-spanning segment; sequence VLWGLLGALLMVMVGWLCLP. Ser325 is modified (phosphoserine). Residue Cys439 participates in heme binding.

It belongs to the cytochrome P450 family. Heme is required as a cofactor. In terms of tissue distribution, liver (at protein level).

It is found in the endoplasmic reticulum membrane. The protein localises to the microsome membrane. The enzyme catalyses 7alpha-hydroxycholest-4-en-3-one + reduced [NADPH--hemoprotein reductase] + O2 = 7alpha,12alpha-dihydroxycholest-4-en-3-one + oxidized [NADPH--hemoprotein reductase] + H2O + H(+). The catalysed reaction is 5beta-cholestane-3alpha,7alpha-diol + reduced [NADPH--hemoprotein reductase] + O2 = 5beta-cholestane-3alpha,7alpha,12alpha-triol + oxidized [NADPH--hemoprotein reductase] + H2O + H(+). It catalyses the reaction chenodeoxycholate + reduced [NADPH--hemoprotein reductase] + O2 = cholate + oxidized [NADPH--hemoprotein reductase] + H2O + H(+). It participates in lipid metabolism; bile acid biosynthesis. With respect to regulation, up-regulated upon treatment with streptozotocin. A cytochrome P450 monooxygenase involved in primary bile acid biosynthesis. Catalyzes the 12alpha-hydroxylation of 7alpha-hydroxy-4-cholesten-3-one, an intermediate metabolite in cholic acid biosynthesis. Controls biliary balance of cholic acid and chenodeoxycholic acid, ultimately regulating the intestinal absorption of dietary lipids. Mechanistically, uses molecular oxygen inserting one oxygen atom into a substrate, and reducing the second into a water molecule, with two electrons provided by NADPH via cytochrome P450 reductase (CPR; NADPH--hemoprotein reductase). This Oryctolagus cuniculus (Rabbit) protein is 7-alpha-hydroxycholest-4-en-3-one 12-alpha-hydroxylase (CYP8B1).